Reading from the N-terminus, the 459-residue chain is Cysteine--tRNA ligase (459 aa).

C31 contributes to the Zn(2+) binding site. The short motif at 33 to 43 (PTVYDNPHIGN) is the 'HIGH' region element. Residues C216, H241, and E245 each contribute to the Zn(2+) site. Residues 274 to 278 (KMSKS) carry the 'KMSKS' region motif. K277 contacts ATP.

The protein belongs to the class-I aminoacyl-tRNA synthetase family. Monomer. The cofactor is Zn(2+).

Its subcellular location is the cytoplasm. The enzyme catalyses tRNA(Cys) + L-cysteine + ATP = L-cysteinyl-tRNA(Cys) + AMP + diphosphate. The polypeptide is Cysteine--tRNA ligase (Rickettsia massiliae (strain Mtu5)).